The primary structure comprises 617 residues: Proline--tRNA ligase (617 aa).

The protein belongs to the class-II aminoacyl-tRNA synthetase family. ProS type 1 subfamily. In terms of assembly, homodimer.

Its subcellular location is the cytoplasm. The enzyme catalyses tRNA(Pro) + L-proline + ATP = L-prolyl-tRNA(Pro) + AMP + diphosphate. Its function is as follows. Catalyzes the attachment of proline to tRNA(Pro) in a two-step reaction: proline is first activated by ATP to form Pro-AMP and then transferred to the acceptor end of tRNA(Pro). As ProRS can inadvertently accommodate and process non-cognate amino acids such as alanine and cysteine, to avoid such errors it has two additional distinct editing activities against alanine. One activity is designated as 'pretransfer' editing and involves the tRNA(Pro)-independent hydrolysis of activated Ala-AMP. The other activity is designated 'posttransfer' editing and involves deacylation of mischarged Ala-tRNA(Pro). The misacylated Cys-tRNA(Pro) is not edited by ProRS. This is Proline--tRNA ligase from Streptococcus agalactiae serotype III (strain NEM316).